A 223-amino-acid chain; its full sequence is DNA mismatch repair protein MutH (223 aa).

It belongs to the MutH family.

The protein resides in the cytoplasm. Sequence-specific endonuclease that cleaves unmethylated GATC sequences. It is involved in DNA mismatch repair. This chain is DNA mismatch repair protein MutH, found in Haemophilus influenzae (strain PittGG).